Reading from the N-terminus, the 283-residue chain is Nopaline-binding periplasmic protein (283 aa).

A signal peptide spans 1 to 25 (MKFFNLNALAAVVTGVLLAAGPTQA). C63 and C70 form a disulfide bridge.

Belongs to the bacterial solute-binding protein 3 family.

It is found in the periplasm. Component of the nopaline active transport system probably consisting of four subunits: Q, M, P and T. This system is also capable of transporting octopine provided that catabolic functions are induced with nopaline. This Agrobacterium fabrum (strain C58 / ATCC 33970) (Agrobacterium tumefaciens (strain C58)) protein is Nopaline-binding periplasmic protein (nocT).